The following is a 679-amino-acid chain: DNA-directed RNA polymerase subunit beta' (679 aa).

Residues cysteine 69, cysteine 71, cysteine 87, and cysteine 90 each coordinate Zn(2+). The Mg(2+) site is built by aspartate 489, aspartate 491, and aspartate 493.

Belongs to the RNA polymerase beta' chain family. RpoC1 subfamily. As to quaternary structure, in plastids the minimal PEP RNA polymerase catalytic core is composed of four subunits: alpha, beta, beta', and beta''. When a (nuclear-encoded) sigma factor is associated with the core the holoenzyme is formed, which can initiate transcription. Mg(2+) is required as a cofactor. Zn(2+) serves as cofactor.

It is found in the plastid. It localises to the chloroplast. The catalysed reaction is RNA(n) + a ribonucleoside 5'-triphosphate = RNA(n+1) + diphosphate. Its function is as follows. DNA-dependent RNA polymerase catalyzes the transcription of DNA into RNA using the four ribonucleoside triphosphates as substrates. The chain is DNA-directed RNA polymerase subunit beta' from Phalaenopsis aphrodite subsp. formosana (Moth orchid).